The primary structure comprises 431 residues: Galanin-like G-protein coupled receptor npr-9 (431 aa).

The Extracellular portion of the chain corresponds to Met-1–Thr-34. Asn-5 is a glycosylation site (N-linked (GlcNAc...) asparagine). The chain crosses the membrane as a helical span at residues Ile-35–Phe-55. Residues Gly-56–Leu-66 lie on the Cytoplasmic side of the membrane. The helical transmembrane segment at Ile-67 to Val-87 threads the bilayer. The Extracellular portion of the chain corresponds to Asp-88–Cys-101. A disulfide bridge links Cys-101 with Cys-182. A helical transmembrane segment spans residues Ser-102–Leu-124. Residues Asp-125–Arg-143 are Cytoplasmic-facing. The chain crosses the membrane as a helical span at residues Asn-144–Gly-164. Residues Arg-165–Thr-203 lie on the Extracellular side of the membrane. The chain crosses the membrane as a helical span at residues Phe-204–Leu-224. The Cytoplasmic portion of the chain corresponds to Arg-225–Arg-268. The span at Asn-235–Ser-252 shows a compositional bias: polar residues. Residues Asn-235–Pro-257 form a disordered region. A helical membrane pass occupies residues Leu-269–Phe-289. At Met-290 to Pro-298 the chain is on the extracellular side. The helical transmembrane segment at Leu-299–Tyr-319 threads the bilayer. The Cytoplasmic segment spans residues Thr-320 to Leu-431. A compositionally biased stretch (polar residues) spans Ser-393–Ala-414. Residues Ser-393–Leu-431 form a disordered region. Residues Lys-415–Ser-425 show a composition bias toward basic residues.

The protein belongs to the G-protein coupled receptor 1 family. In terms of tissue distribution, exclusively expressed in the AIB interneuron.

The protein localises to the cell membrane. Its function is as follows. Neuropeptide that controls movement such as roaming, foraging and backwards locomotion or 'reversals' in response to environmental cues such as food availability or volatile odorants such as octanol. Antagonizes AIB interneuron activity to control bacterial colonization and may negatively regulate the expression of immunity-related genes such as pqm-1 and dod-22 in response to infection by P.aeruginosa. This chain is Galanin-like G-protein coupled receptor npr-9, found in Caenorhabditis elegans.